A 130-amino-acid polypeptide reads, in one-letter code: Small ribosomal subunit protein uS9 (130 aa).

The tract at residues 107 to 130 (DARMKERKKPGLKKARKASQFSKR) is disordered. The span at 111–130 (KERKKPGLKKARKASQFSKR) shows a compositional bias: basic residues.

This sequence belongs to the universal ribosomal protein uS9 family.

The sequence is that of Small ribosomal subunit protein uS9 from Ligilactobacillus salivarius (strain UCC118) (Lactobacillus salivarius).